We begin with the raw amino-acid sequence, 355 residues long: MSGKTKRLMVMAGGTGGHVFPGLAVAHHLMAQGWQVRWLGTADRMEASLVPKNGIEIDFIEISGLRGKGLMAQLTAPVRIYRAVRQAKKIMRDYQPDVVLGMGGYVSGPGGLAAWLCGIPVVLHEQNGIAGLTNRWLARIAKKVLQAFPGAFPNADVVGNPVRTDVLALPLPAQRLVGREGPIRVLVIGGSQGARVLNQTMPQVAATLGEQITIWHQVGKGALPDVLQAYQQAGQGDKHQVVEFIDDMAAAYAWADVVVCRSGALTVSEVAAAGLPAIFVPFQHKDRQQYWNALPLEKAGAAKIIEQPQFTAQAVSNLLAEWDRPTLLAMAEQARLVAIPDATERVAAEVAAASK.

UDP-N-acetyl-alpha-D-glucosamine contacts are provided by residues T15–G17, N127, R163, S191, I245, A264–E269, and Q289.

This sequence belongs to the glycosyltransferase 28 family. MurG subfamily.

The protein resides in the cell inner membrane. The enzyme catalyses di-trans,octa-cis-undecaprenyl diphospho-N-acetyl-alpha-D-muramoyl-L-alanyl-D-glutamyl-meso-2,6-diaminopimeloyl-D-alanyl-D-alanine + UDP-N-acetyl-alpha-D-glucosamine = di-trans,octa-cis-undecaprenyl diphospho-[N-acetyl-alpha-D-glucosaminyl-(1-&gt;4)]-N-acetyl-alpha-D-muramoyl-L-alanyl-D-glutamyl-meso-2,6-diaminopimeloyl-D-alanyl-D-alanine + UDP + H(+). It participates in cell wall biogenesis; peptidoglycan biosynthesis. Cell wall formation. Catalyzes the transfer of a GlcNAc subunit on undecaprenyl-pyrophosphoryl-MurNAc-pentapeptide (lipid intermediate I) to form undecaprenyl-pyrophosphoryl-MurNAc-(pentapeptide)GlcNAc (lipid intermediate II). The chain is UDP-N-acetylglucosamine--N-acetylmuramyl-(pentapeptide) pyrophosphoryl-undecaprenol N-acetylglucosamine transferase from Yersinia enterocolitica serotype O:8 / biotype 1B (strain NCTC 13174 / 8081).